A 327-amino-acid polypeptide reads, in one-letter code: Phenylalanine--tRNA ligase alpha subunit (327 aa).

Glu252 contacts Mg(2+).

This sequence belongs to the class-II aminoacyl-tRNA synthetase family. Phe-tRNA synthetase alpha subunit type 1 subfamily. As to quaternary structure, tetramer of two alpha and two beta subunits. Requires Mg(2+) as cofactor.

It is found in the cytoplasm. The enzyme catalyses tRNA(Phe) + L-phenylalanine + ATP = L-phenylalanyl-tRNA(Phe) + AMP + diphosphate + H(+). This Hamiltonella defensa subsp. Acyrthosiphon pisum (strain 5AT) protein is Phenylalanine--tRNA ligase alpha subunit.